Reading from the N-terminus, the 243-residue chain is Protein-L-isoaspartate O-methyltransferase 2 (243 aa).

Positions aspartate 21 to arginine 42 are disordered. Basic and acidic residues predominate over residues cysteine 23–arginine 42. Residue serine 94 is part of the active site.

This sequence belongs to the methyltransferase superfamily. L-isoaspartyl/D-aspartyl protein methyltransferase family.

The protein resides in the cytoplasm. The catalysed reaction is [protein]-L-isoaspartate + S-adenosyl-L-methionine = [protein]-L-isoaspartate alpha-methyl ester + S-adenosyl-L-homocysteine. Functionally, catalyzes the methyl esterification of L-isoaspartyl residues in peptides and proteins that result from spontaneous decomposition of normal L-aspartyl and L-asparaginyl residues. It plays a role in the repair and/or degradation of damaged proteins. The polypeptide is Protein-L-isoaspartate O-methyltransferase 2 (Anaeromyxobacter sp. (strain Fw109-5)).